The sequence spans 146 residues: Large ribosomal subunit protein uL15 (146 aa).

Residues 1–18 (MKLHELKPAEGSRKERNR) are compositionally biased toward basic and acidic residues. Residues 1-54 (MKLHELKPAEGSRKERNRVGRGVATGNGKTSGRGHKGQKARSGGGVRPGFEGGQ) are disordered. The span at 42–52 (SGGGVRPGFEG) shows a compositional bias: gly residues.

Belongs to the universal ribosomal protein uL15 family. In terms of assembly, part of the 50S ribosomal subunit.

Binds to the 23S rRNA. The protein is Large ribosomal subunit protein uL15 of Staphylococcus aureus (strain Mu3 / ATCC 700698).